We begin with the raw amino-acid sequence, 414 residues long: Mannan endo-1,4-beta-mannosidase 2 (414 aa).

A signal peptide spans 1 to 25 (MAYFQRLISCIFVLFLLSLAFACEA). 2 residues coordinate substrate: Trp95 and Asn210. Glu211 (proton donor) is an active-site residue. Tyr288 is a binding site for substrate. Glu328 acts as the Nucleophile in catalysis. Trp370 serves as a coordination point for substrate.

The protein belongs to the glycosyl hydrolase 5 (cellulase A) family.

It is found in the secreted. The enzyme catalyses Random hydrolysis of (1-&gt;4)-beta-D-mannosidic linkages in mannans, galactomannans and glucomannans.. Possesses endo-beta-mannanase activity in vitro. May be involved in seed germination by weakening the endosperm cap prior to radicle emergence. This Solanum lycopersicum (Tomato) protein is Mannan endo-1,4-beta-mannosidase 2 (MAN2).